The following is a 377-amino-acid chain: 1-deoxy-D-xylulose 5-phosphate reductoisomerase (377 aa).

Thr20, Gly21, Ile23, Asn46, and Asn115 together coordinate NADPH. Lys116 is a binding site for 1-deoxy-D-xylulose 5-phosphate. Glu117 is an NADPH binding site. Asp141 contributes to the Mn(2+) binding site. Residues Ser142, Glu143, Ser166, and His189 each coordinate 1-deoxy-D-xylulose 5-phosphate. Residue Glu143 coordinates Mn(2+). Gly195 lines the NADPH pocket. 1-deoxy-D-xylulose 5-phosphate is bound by residues Ser202, Asn207, Lys208, and Glu211. Glu211 provides a ligand contact to Mn(2+).

This sequence belongs to the DXR family. The cofactor is Mg(2+). Mn(2+) is required as a cofactor.

The catalysed reaction is 2-C-methyl-D-erythritol 4-phosphate + NADP(+) = 1-deoxy-D-xylulose 5-phosphate + NADPH + H(+). It functions in the pathway isoprenoid biosynthesis; isopentenyl diphosphate biosynthesis via DXP pathway; isopentenyl diphosphate from 1-deoxy-D-xylulose 5-phosphate: step 1/6. Functionally, catalyzes the NADPH-dependent rearrangement and reduction of 1-deoxy-D-xylulose-5-phosphate (DXP) to 2-C-methyl-D-erythritol 4-phosphate (MEP). The sequence is that of 1-deoxy-D-xylulose 5-phosphate reductoisomerase from Malacoplasma penetrans (strain HF-2) (Mycoplasma penetrans).